Consider the following 347-residue polypeptide: Queuosine 5'-phosphate N-glycosylase/hydrolase (347 aa).

Residues H53, F237, D239, D321, and D326 each contribute to the queuine site. The active-site Nucleophile or transition state stabilizer is the D239.

Belongs to the QNG1 protein family.

It catalyses the reaction queuosine 5'-phosphate + H2O = queuine + D-ribose 5-phosphate. Functionally, catalyzes the hydrolysis of queuosine 5'-phosphate, releasing the nucleobase queuine (q). Is required for salvage of queuine from exogenous queuosine (Q) that is imported and then converted to queuosine 5'-phosphate intracellularly. The polypeptide is Queuosine 5'-phosphate N-glycosylase/hydrolase (Nematostella vectensis (Starlet sea anemone)).